A 648-amino-acid polypeptide reads, in one-letter code: Macrolide export ATP-binding/permease protein MacB 1 (648 aa).

An ABC transporter domain is found at 6–244; it reads LQLSGIRRHF…PAPTTSRADT (239 aa). 42-49 contributes to the ATP binding site; the sequence is GASGSGKS. The segment at 222–248 is disordered; sequence VVADRRREPTPPSPAPTTSRADTGGRG. The next 4 helical transmembrane spans lie at 273-293, 521-541, 578-598, and 613-633; these read FLTM…VALG, LTLL…IGVM, LVCL…GVLF, and AVLM…FFPA.

It belongs to the ABC transporter superfamily. Macrolide exporter (TC 3.A.1.122) family. In terms of assembly, homodimer. Part of the tripartite efflux system MacAB-TolC, which is composed of an inner membrane transporter, MacB, a periplasmic membrane fusion protein, MacA, and an outer membrane component, TolC. The complex forms a large protein conduit and can translocate molecules across both the inner and outer membranes. Interacts with MacA.

It localises to the cell inner membrane. Part of the tripartite efflux system MacAB-TolC. MacB is a non-canonical ABC transporter that contains transmembrane domains (TMD), which form a pore in the inner membrane, and an ATP-binding domain (NBD), which is responsible for energy generation. Confers resistance against macrolides. The sequence is that of Macrolide export ATP-binding/permease protein MacB 1 from Aeromonas hydrophila subsp. hydrophila (strain ATCC 7966 / DSM 30187 / BCRC 13018 / CCUG 14551 / JCM 1027 / KCTC 2358 / NCIMB 9240 / NCTC 8049).